A 40-amino-acid chain; its full sequence is Beta-defensin 2 (40 aa).

Disulfide bonds link Cys-7/Cys-36, Cys-14/Cys-29, and Cys-19/Cys-37.

It belongs to the beta-defensin family. As to expression, neutrophilic granules.

It is found in the secreted. Has bactericidal activity. Active against E.coli ML35 and S.aureus 502A. This is Beta-defensin 2 (DEFB2) from Bos taurus (Bovine).